We begin with the raw amino-acid sequence, 289 residues long: Protease HtpX (289 aa).

A run of 2 helical transmembrane segments spans residues 4-24 and 36-56; these read IMLF…VLNI and LSGL…ISLM. His-143 provides a ligand contact to Zn(2+). Glu-144 is an active-site residue. His-147 serves as a coordination point for Zn(2+). Helical transmembrane passes span 158-178 and 192-212; these read LMQG…ANIV and MVYF…ASFL. Position 221 (Glu-221) interacts with Zn(2+).

It belongs to the peptidase M48B family. It depends on Zn(2+) as a cofactor.

The protein localises to the cell inner membrane. In Vibrio campbellii (strain ATCC BAA-1116), this protein is Protease HtpX.